We begin with the raw amino-acid sequence, 317 residues long: Transcription cofactor vestigial-like protein 2 (317 aa).

Disordered stretches follow at residues Cys-41–Pro-76, Ser-108–Pro-128, Thr-191–Leu-214, and Arg-253–Asp-293. Over residues Ser-44–Ser-57 the composition is skewed to low complexity. A compositionally biased stretch (basic and acidic residues) spans Ile-63 to Pro-76. A compositionally biased stretch (low complexity) spans Ser-108–Ser-120. Positions His-196–His-206 are enriched in basic residues. The span at Lys-272–Gly-292 shows a compositional bias: low complexity.

Belongs to the vestigial family. In terms of assembly, interacts with TEFs. Binds to TEAD1/TEF1. Skeletal muscle.

The protein resides in the nucleus. In terms of biological role, may act as a specific coactivator for the mammalian TEFs. May play a role in the development of skeletal muscles. The protein is Transcription cofactor vestigial-like protein 2 (VGLL2) of Homo sapiens (Human).